A 453-amino-acid chain; its full sequence is Ribulose bisphosphate carboxylase large chain (453 aa).

Positions 1-2 are excised as a propeptide; the sequence is MS. Pro-3 bears the N-acetylproline mark. Lys-14 carries the N6,N6,N6-trimethyllysine modification. The substrate site is built by Asn-123 and Thr-173. The Proton acceptor role is filled by Lys-175. Residue Lys-177 participates in substrate binding. Lys-201, Asp-203, and Glu-204 together coordinate Mg(2+). At Lys-201 the chain carries N6-carboxylysine. His-294 (proton acceptor) is an active-site residue. Substrate is bound by residues Arg-295, His-327, and Ser-379.

It belongs to the RuBisCO large chain family. Type I subfamily. Heterohexadecamer of 8 large chains and 8 small chains; disulfide-linked. The disulfide link is formed within the large subunit homodimers. Mg(2+) is required as a cofactor. The disulfide bond which can form in the large chain dimeric partners within the hexadecamer appears to be associated with oxidative stress and protein turnover.

It localises to the plastid. It is found in the chloroplast. The catalysed reaction is 2 (2R)-3-phosphoglycerate + 2 H(+) = D-ribulose 1,5-bisphosphate + CO2 + H2O. It catalyses the reaction D-ribulose 1,5-bisphosphate + O2 = 2-phosphoglycolate + (2R)-3-phosphoglycerate + 2 H(+). Functionally, ruBisCO catalyzes two reactions: the carboxylation of D-ribulose 1,5-bisphosphate, the primary event in carbon dioxide fixation, as well as the oxidative fragmentation of the pentose substrate in the photorespiration process. Both reactions occur simultaneously and in competition at the same active site. The sequence is that of Ribulose bisphosphate carboxylase large chain from Crucianella angustifolia (Narrow-leaved crosswort).